We begin with the raw amino-acid sequence, 161 residues long: Nucleotide-binding protein PSEEN4469 (161 aa).

Belongs to the YajQ family.

Its function is as follows. Nucleotide-binding protein. The protein is Nucleotide-binding protein PSEEN4469 of Pseudomonas entomophila (strain L48).